A 187-amino-acid polypeptide reads, in one-letter code: UPF0301 protein VP2612 (187 aa).

The protein belongs to the UPF0301 (AlgH) family.

This Vibrio parahaemolyticus serotype O3:K6 (strain RIMD 2210633) protein is UPF0301 protein VP2612.